We begin with the raw amino-acid sequence, 1657 residues long: Androglobin (1657 aa).

Over residues 1–11 the composition is skewed to basic residues; the sequence is MASKQAKRKEV. Disordered stretches follow at residues 1 to 40 and 321 to 398; these read MASK…SFEQ and TKEN…SSDV. In terms of domain architecture, Calpain catalytic spans 70–402; the sequence is KDKTAKSPIF…RPSSDVQYSM (333 aa). Residues 321 to 386 are compositionally biased toward basic and acidic residues; the sequence is TKENKDGKDG…DGEKEKEKFK (66 aa). In terms of domain architecture, Globin; C-terminal part spans 762-889; it reads HVCSMTTFVI…EDVSLAEWVD (128 aa). Residues glutamine 791 and histidine 823 each coordinate heme b. In terms of domain architecture, IQ spans 905-934; that stretch reads EIAAAVKIQSMWKGCYVRLLMKARKPETKE. Residues 935-967 form the Globin; N-terminal part domain; the sequence is NVTVADTLQKIWAVLEMNLEQYALSLLRLMFKS. 4 disordered regions span residues 1184–1226, 1288–1356, 1422–1459, and 1638–1657; these read SKQV…TDTG, KHEE…QEDP, TTDT…ADIK, and IEKK…GKKK. Residues 1321 to 1336 are compositionally biased toward basic and acidic residues; sequence EKSAEKEKLAKEKQAP. Composition is skewed to polar residues over residues 1341–1351 and 1422–1443; these read QQVQMPTAVHS and TTDT…SQTK. Residues 1585–1640 adopt a coiled-coil conformation; the sequence is DEVLEMYGEMRDSVDEARQKILDIREVYRNKLLEAERLRMEALAAQEAAVKIEIEK.

It in the central section; belongs to the globin family. The protein in the N-terminal section; belongs to the peptidase C2 family. In terms of assembly, interacts with septin SEPT10; contributes to in vitro proteolytic cleavage of SEPT10 in a calmodulin-dependent manner. Interacts with CFAP69. Interacts with SPEF2. May interact with calmodulin. In terms of tissue distribution, strongly expressed in testis and lung. Weakly expressed in heart, brain, spleen, kidney and tongue.

It localises to the cell projection. The protein localises to the cilium. It is found in the flagellum. Functionally, probable chimeric globin with a bis-histidyl six-coordinate heme-iron atom through which it could bind dioxygen, carbon monoxide and nitric oxide. Required for sperm flagellum formation and maturation of elongating spermatids, thus playing an essential role in male fertility. The polypeptide is Androglobin (Mus musculus (Mouse)).